The sequence spans 286 residues: Octanoyltransferase (286 aa).

Residues leucine 50–isoleucine 278 enclose the BPL/LPL catalytic domain. Substrate contacts are provided by residues arginine 89–histidine 96, serine 190–glycine 192, and glycine 203–alanine 205. The Acyl-thioester intermediate role is filled by cysteine 221.

It belongs to the LipB family.

It is found in the cytoplasm. It catalyses the reaction octanoyl-[ACP] + L-lysyl-[protein] = N(6)-octanoyl-L-lysyl-[protein] + holo-[ACP] + H(+). It participates in protein modification; protein lipoylation via endogenous pathway; protein N(6)-(lipoyl)lysine from octanoyl-[acyl-carrier-protein]: step 1/2. Catalyzes the transfer of endogenously produced octanoic acid from octanoyl-acyl-carrier-protein onto the lipoyl domains of lipoate-dependent enzymes. Lipoyl-ACP can also act as a substrate although octanoyl-ACP is likely to be the physiological substrate. The polypeptide is Octanoyltransferase (Psychrobacter arcticus (strain DSM 17307 / VKM B-2377 / 273-4)).